The following is a 901-amino-acid chain: MAAQNEQRPERIKTTPYLEGDVLSSDSGPLLSVFALQEIMQKVRQVQADYMTATREVDFTVPDVQQILDDIKALAAAQVYKIVKVPSTSFRHIVTQSRDRVLRVDTYYEEMSQVGDVITEDEPEKFYSTIIKKVRFIRGKGSFILHDIPARDHRGMEVAEPEVLGVEFKNVLPVLTAEHRAMIQNALDGSIIENGNVATRDVDVFIGACSEPFYRIYNRFQGYIEAVQLQELRNSIGWLERLGQRKRITYSQEVLTDFRRQDMIWVLALQLPVNPQVVWDVPRSSIANLIMNIATCLPTGEYIAPNPRISSITLTQRITTTGPFAILTGSTPTAQQLNDVRKIYLALMFPGQIILDLKIDPGERMDPAVRMVAGVVGHLLFTAGGRFTNLTQNMARQLDIALNDYLLYMYNTRVQVNYGPTGEPLDFQIGRNQYDCNVFRADFATGTGYNGWATIDVEYRDPAPYVHAQRYIRYCGIDSRELINPTTYGIGMTYHCYNEMLRMLVAAGKDSEAAYFRSMLPFHMVRFARINQIINEDLHSVFSLPDDMFNALLPDLIAGAHQNADPVVLDVSWISLWFAFNRSFEPTHRNEMLEIAPLIESVYASELSVMKVDMRHLSLMQRRFPDVLIQARPSHFWKAVLNDSPEAVKAVMNLSHSHNFINIRDMMRWVLLPSLQPSLKLVLEEEAWAAANDFEDLMLTDQVYMHRDMLPEPRLDDIERFRQEGFYYTNMLEAPPEIDRVVQYTYEIARLQANMGQFRAALRRIMDDDDWIGFGGVLRTVRVKFFDARPPDDILQGLPFSYDTNEKGGLSYATIKYATETTIFYLIYNVEFSNTPDSLVLINPTYTMTKVFINKRIVERVRVGQILAVLNRRFVAYKGKMRIMDITQSLKMGTKLAAPTV.

This sequence belongs to the orbivirus VP3 family.

The protein localises to the virion. In terms of biological role, the VP3 protein is one of the five proteins (with VP1, VP4, VP6 and VP7) which form the inner capsid of the virus. The chain is Core protein VP3 (Segment-3) from Bluetongue virus 1 (isolate South Africa) (BTV 1).